A 304-amino-acid chain; its full sequence is MIHPEQVADMLRPTTSTTSSHVPGPVPTVVPTPTEYQTLGETGHRTLWVTFALMVLSSGIFALLSWNVPTSKRLFHVITTLITVVASLSYFAMATGHATTFNCDTAWDHHKHVPDTSHQVCRQVFWGRYVDWALTTPLLLLELCLLAGVDGAHTLMAIVADVIMVLCGLFAALGEGGNTAQKWGWYTIGCFSYLFVIWHVALHGSRTVTAKGRGVSRLFTGLAVFALLLWTAYPIIWGIAGGARRTNVDTEILIYTVLDLLAKPVFGFWLLLSHRAMPETNIDLPGYWSHGLATEGRIRIGEED.

The Extracellular portion of the chain corresponds to 1 to 45; the sequence is MIHPEQVADMLRPTTSTTSSHVPGPVPTVVPTPTEYQTLGETGHR. The chain crosses the membrane as a helical span at residues 46–66; it reads TLWVTFALMVLSSGIFALLSW. A helical transmembrane segment spans residues 74 to 94; sequence LFHVITTLITVVASLSYFAMA. A helical transmembrane segment spans residues 129–149; sequence YVDWALTTPLLLLELCLLAGV. Residues 154-174 traverse the membrane as a helical segment; sequence TLMAIVADVIMVLCGLFAALG. A helical membrane pass occupies residues 183–203; that stretch reads WGWYTIGCFSYLFVIWHVALH. The helical transmembrane segment at 219–239 threads the bilayer; the sequence is FTGLAVFALLLWTAYPIIWGI. A helical transmembrane segment spans residues 252 to 272; that stretch reads ILIYTVLDLLAKPVFGFWLLL. Residue K263 is modified to N6-(retinylidene)lysine. The Cytoplasmic segment spans residues 273-304; the sequence is SHRAMPETNIDLPGYWSHGLATEGRIRIGEED.

This sequence belongs to the archaeal/bacterial/fungal opsin family. Post-translationally, binds all-trans retinal via a protonated Schiff base linkage.

It is found in the membrane. Could facilitate a sensory photoresponse. The sequence is that of Opsin-1 (nop-1) from Neurospora crassa (strain ATCC 24698 / 74-OR23-1A / CBS 708.71 / DSM 1257 / FGSC 987).